Consider the following 201-residue polypeptide: Glycerol-3-phosphate acyltransferase (201 aa).

6 helical membrane passes run 10–30, 60–80, 86–106, 116–136, 139–159, and 166–186; these read MLIG…GLIL, LAAA…LIAA, AAIA…WIGF, LGVL…AWIV, LLTR…PIAL, and ALAA…RANI.

Belongs to the PlsY family. As to quaternary structure, probably interacts with PlsX.

The protein resides in the cell inner membrane. The catalysed reaction is an acyl phosphate + sn-glycerol 3-phosphate = a 1-acyl-sn-glycero-3-phosphate + phosphate. The protein operates within lipid metabolism; phospholipid metabolism. Its function is as follows. Catalyzes the transfer of an acyl group from acyl-phosphate (acyl-PO(4)) to glycerol-3-phosphate (G3P) to form lysophosphatidic acid (LPA). This enzyme utilizes acyl-phosphate as fatty acyl donor, but not acyl-CoA or acyl-ACP. The polypeptide is Glycerol-3-phosphate acyltransferase (Brucella ovis (strain ATCC 25840 / 63/290 / NCTC 10512)).